The chain runs to 880 residues: uncharacterized protein (880 aa).

Disordered regions lie at residues 101–149 (KPIP…LRSE), 191–224 (PETS…ISTH), 240–273 (TTTT…PILK), 294–350 (NSNS…STTS), 425–446 (QPDS…ESQP), 470–508 (STST…SSSS), 536–561 (MESS…NDNS), 580–613 (APQS…NDDE), 682–713 (NTNT…NINN), and 844–880 (NSSG…KSEI). Positions 113 to 147 (ISIKEKEKEKEKEKEKEKEKEKEKEKEMKSTINLR) form a coiled coil. The span at 115 to 149 (IKEKEKEKEKEKEKEKEKEKEKEKEMKSTINLRSE) shows a compositional bias: basic and acidic residues. 2 stretches are compositionally biased toward low complexity: residues 193-223 (TSTP…SIST) and 240-256 (TTTT…PSSS). Polar residues predominate over residues 257-271 (IAGITNPTSRSSSPI). Over residues 294–332 (NSNSSSGGGNNNNKSISTPSSPIISRPITNKINNNNNNN) the composition is skewed to low complexity. Polar residues predominate over residues 333-342 (QPQLHYNQPQ). Residues 536-548 (MESSTTTTLLSEN) show a composition bias toward low complexity. Over residues 589-613 (QPEDDPFFDFEDLSDDDDSNDNDDE) the composition is skewed to acidic residues. The span at 844–864 (NSSGSGNNSNDNSGSSSPSSS) shows a compositional bias: low complexity. Polar residues predominate over residues 865 to 880 (KTNTLNQQSICIKSEI).

This is an uncharacterized protein from Dictyostelium discoideum (Social amoeba).